A 337-amino-acid chain; its full sequence is Phenylalanine--tRNA ligase alpha subunit (337 aa).

Residue glutamate 258 coordinates Mg(2+).

This sequence belongs to the class-II aminoacyl-tRNA synthetase family. Phe-tRNA synthetase alpha subunit type 1 subfamily. Tetramer of two alpha and two beta subunits. The cofactor is Mg(2+).

Its subcellular location is the cytoplasm. The catalysed reaction is tRNA(Phe) + L-phenylalanine + ATP = L-phenylalanyl-tRNA(Phe) + AMP + diphosphate + H(+). The protein is Phenylalanine--tRNA ligase alpha subunit of Burkholderia thailandensis (strain ATCC 700388 / DSM 13276 / CCUG 48851 / CIP 106301 / E264).